Here is a 382-residue protein sequence, read N- to C-terminus: Mannitol-1-phosphate 5-dehydrogenase (382 aa).

Alanine 3–glycine 14 provides a ligand contact to NAD(+).

This sequence belongs to the mannitol dehydrogenase family.

It carries out the reaction D-mannitol 1-phosphate + NAD(+) = beta-D-fructose 6-phosphate + NADH + H(+). The chain is Mannitol-1-phosphate 5-dehydrogenase from Psychromonas ingrahamii (strain DSM 17664 / CCUG 51855 / 37).